Reading from the N-terminus, the 154-residue chain is MTVPRTGRPGGIRAAAPSRSGWRTQAPVVAVVALGGGTGAAARYAASLWWPTPAGGFPWTTFGVNAVGCAVIGVFMVVITEVRPAHRLVRPFFGTGVLGGFTTFSTYAVDSRSLFADGRLPTGLAYLAATPLAALTAVWLAAWAARRVLKWRQS.

The next 4 membrane-spanning stretches (helical) occupy residues 28–48 (VVAVVALGGGTGAAARYAASL), 59–79 (WTTFGVNAVGCAVIGVFMVVI), 91–111 (PFFGTGVLGGFTTFSTYAVDS), and 124–144 (LAYLAATPLAALTAVWLAAWA). Residues G99 and T102 each contribute to the Na(+) site.

Belongs to the fluoride channel Fluc/FEX (TC 1.A.43) family.

It is found in the cell membrane. The enzyme catalyses fluoride(in) = fluoride(out). With respect to regulation, na(+) is not transported, but it plays an essential structural role and its presence is essential for fluoride channel function. Functionally, fluoride-specific ion channel. Important for reducing fluoride concentration in the cell, thus reducing its toxicity. This chain is Fluoride-specific ion channel FluC 1, found in Streptomyces coelicolor (strain ATCC BAA-471 / A3(2) / M145).